Here is a 172-residue protein sequence, read N- to C-terminus: Adenine phosphoribosyltransferase (172 aa).

This sequence belongs to the purine/pyrimidine phosphoribosyltransferase family. In terms of assembly, homodimer.

The protein resides in the cytoplasm. It carries out the reaction AMP + diphosphate = 5-phospho-alpha-D-ribose 1-diphosphate + adenine. Its pathway is purine metabolism; AMP biosynthesis via salvage pathway; AMP from adenine: step 1/1. In terms of biological role, catalyzes a salvage reaction resulting in the formation of AMP, that is energically less costly than de novo synthesis. The sequence is that of Adenine phosphoribosyltransferase from Parasynechococcus marenigrum (strain WH8102).